The chain runs to 48 residues: uncharacterized protein (48 aa).

Residues 1–48 (MSRRMGGGMPKINLSGAIPNNNTSTPSTPTLRSSVSVSSSNSRGLFLA) are disordered. Residues 20–48 (NNNTSTPSTPTLRSSVSVSSSNSRGLFLA) show a composition bias toward low complexity.

This is an uncharacterized protein from Dictyostelium discoideum (Social amoeba).